Here is a 183-residue protein sequence, read N- to C-terminus: Caltractin ICL1f (183 aa).

Low complexity predominate over residues methionine 1–glutamine 19. The segment at methionine 1 to glutamate 30 is disordered. 4 EF-hand domains span residues glutamate 39–glutamate 74, alanine 75–glutamate 110, aspartate 112–threonine 147, and methionine 148–alanine 183. Residues aspartate 52, aspartate 54, threonine 56, serine 58, glutamate 63, aspartate 88, aspartate 90, serine 92, glutamine 94, and glutamate 99 each contribute to the Ca(2+) site.

The protein belongs to the centrin family. Monomer.

It localises to the cytoplasm. The protein localises to the cytoskeleton. Its function is as follows. Plays a fundamental role in microtubule organizing center structure and function. Component of the infraciliary lattice (ICL) and the ciliary basal bodies. In Paramecium tetraurelia, this protein is Caltractin ICL1f (Icl1f).